The primary structure comprises 90 residues: Bombyxin G-1 (90 aa).

The first 19 residues, 1 to 19 (MKLIIFVVFCITIYGSTSG), serve as a signal peptide directing secretion. Intrachain disulfides connect cysteine 28–cysteine 77, cysteine 40–cysteine 90, and cysteine 76–cysteine 81. The propeptide at 49–67 (NTQYEGYHWPLLAYSEERI) is c peptide like.

The protein belongs to the insulin family. In terms of assembly, heterodimer of a B chain and an A chain linked by two disulfide bonds.

The protein localises to the secreted. The polypeptide is Bombyxin G-1 (BBXG1) (Bombyx mori (Silk moth)).